The following is a 275-amino-acid chain: Large ribosomal subunit protein uL2 (275 aa).

Residues serine 38 to histidine 53 are compositionally biased toward polar residues. 2 disordered regions span residues serine 38–glutamine 60 and alanine 224–arginine 257.

It belongs to the universal ribosomal protein uL2 family. Part of the 50S ribosomal subunit. Forms a bridge to the 30S subunit in the 70S ribosome.

Its function is as follows. One of the primary rRNA binding proteins. Required for association of the 30S and 50S subunits to form the 70S ribosome, for tRNA binding and peptide bond formation. It has been suggested to have peptidyltransferase activity; this is somewhat controversial. Makes several contacts with the 16S rRNA in the 70S ribosome. This chain is Large ribosomal subunit protein uL2, found in Burkholderia pseudomallei (strain 1106a).